The sequence spans 352 residues: Ion-translocating oxidoreductase complex subunit D (352 aa).

4 consecutive transmembrane segments (helical) span residues 20-40 (IMLL…WFFG), 42-62 (GTLF…AIVL), 69-91 (VASH…SIPP), and 123-143 (PAMI…TSWL). At T187 the chain carries FMN phosphoryl threonine. A run of 5 helical transmembrane segments spans residues 215–235 (LAGV…VFLL), 242–262 (WHIP…GWLF), 267–287 (LASP…FFIL), 301–321 (LIFG…GGYP), and 322–342 (DGVA…DYYT).

The protein belongs to the NqrB/RnfD family. In terms of assembly, the complex is composed of six subunits: RsxA, RsxB, RsxC, RsxD, RsxE and RsxG. Requires FMN as cofactor.

The protein localises to the cell inner membrane. Its function is as follows. Part of a membrane-bound complex that couples electron transfer with translocation of ions across the membrane. Required to maintain the reduced state of SoxR. The polypeptide is Ion-translocating oxidoreductase complex subunit D (Salmonella paratyphi A (strain ATCC 9150 / SARB42)).